A 332-amino-acid chain; its full sequence is uncharacterized protein (332 aa).

Positions 1–32 are cleaved as a signal peptide; sequence MSRDRGARGLRKYGRFALATGAATALSLTASG. Cys33 is lipidated: N-palmitoyl cysteine. Cys33 carries S-diacylglycerol cysteine lipidation.

It is found in the cell membrane. This is an uncharacterized protein from Streptomyces avermitilis (strain ATCC 31267 / DSM 46492 / JCM 5070 / NBRC 14893 / NCIMB 12804 / NRRL 8165 / MA-4680).